Reading from the N-terminus, the 202-residue chain is Probable molybdenum cofactor guanylyltransferase (202 aa).

GTP is bound by residues 9–11, Lys22, Asn50, Asp77, and Asp102; that span reads VAG. Asp102 is a binding site for Mg(2+).

It belongs to the MobA family. It depends on Mg(2+) as a cofactor.

It is found in the cytoplasm. The enzyme catalyses Mo-molybdopterin + GTP + H(+) = Mo-molybdopterin guanine dinucleotide + diphosphate. Functionally, transfers a GMP moiety from GTP to Mo-molybdopterin (Mo-MPT) cofactor (Moco or molybdenum cofactor) to form Mo-molybdopterin guanine dinucleotide (Mo-MGD) cofactor. In Natronomonas pharaonis (strain ATCC 35678 / DSM 2160 / CIP 103997 / JCM 8858 / NBRC 14720 / NCIMB 2260 / Gabara) (Halobacterium pharaonis), this protein is Probable molybdenum cofactor guanylyltransferase.